Reading from the N-terminus, the 304-residue chain is Putative S-adenosyl-L-methionine-dependent methyltransferase MAV_4236 (304 aa).

S-adenosyl-L-methionine is bound by residues Asp-129 and 158-159; that span reads DL.

It belongs to the UPF0677 family.

Its function is as follows. Exhibits S-adenosyl-L-methionine-dependent methyltransferase activity. In Mycobacterium avium (strain 104), this protein is Putative S-adenosyl-L-methionine-dependent methyltransferase MAV_4236.